A 398-amino-acid chain; its full sequence is Meiosis-specific protein SPO11 (398 aa).

Positions 40–175 constitute a Topo IIA-type catalytic domain; it reads CSNADVLAHI…LNIIPAQKGL (136 aa). Tyrosine 135 (O-(5'-phospho-DNA)-tyrosine intermediate) is an active-site residue. Mg(2+) contacts are provided by glutamate 233 and aspartate 288.

This sequence belongs to the TOP6A family. Mg(2+) is required as a cofactor.

Its subcellular location is the nucleus. The protein resides in the chromosome. It carries out the reaction ATP-dependent breakage, passage and rejoining of double-stranded DNA.. Functionally, required for meiotic recombination. Mediates DNA cleavage that forms the double-strand breaks (DSB) that initiate meiotic recombination. The action of SPO11 is important in setting off a regulatory chain of events encompassing 5' to 3' resection. When there are no SPO11-DSBs, resection of a site specific VDE-DSB takes place but it is faster than in wild-type meiosis and increases the risk of uncovering flanking homology. The polypeptide is Meiosis-specific protein SPO11 (SPO11) (Saccharomyces cerevisiae (strain ATCC 204508 / S288c) (Baker's yeast)).